The primary structure comprises 416 residues: Serine hydroxymethyltransferase (416 aa).

(6S)-5,6,7,8-tetrahydrofolate-binding positions include Leu-118 and 122-124 (GHL). Lys-226 bears the N6-(pyridoxal phosphate)lysine mark. (6S)-5,6,7,8-tetrahydrofolate-binding positions include Glu-242 and 350–352 (SPF).

It belongs to the SHMT family. In terms of assembly, homodimer. Pyridoxal 5'-phosphate is required as a cofactor.

It is found in the cytoplasm. It catalyses the reaction (6R)-5,10-methylene-5,6,7,8-tetrahydrofolate + glycine + H2O = (6S)-5,6,7,8-tetrahydrofolate + L-serine. Its pathway is one-carbon metabolism; tetrahydrofolate interconversion. It participates in amino-acid biosynthesis; glycine biosynthesis; glycine from L-serine: step 1/1. Its function is as follows. Catalyzes the reversible interconversion of serine and glycine with tetrahydrofolate (THF) serving as the one-carbon carrier. This reaction serves as the major source of one-carbon groups required for the biosynthesis of purines, thymidylate, methionine, and other important biomolecules. Also exhibits THF-independent aldolase activity toward beta-hydroxyamino acids, producing glycine and aldehydes, via a retro-aldol mechanism. The chain is Serine hydroxymethyltransferase from Helicobacter pylori (strain G27).